The primary structure comprises 387 residues: Mannitol-1-phosphate 5-dehydrogenase (387 aa).

3–14 (ALHFGAGNIGRG) contributes to the NAD(+) binding site.

It belongs to the mannitol dehydrogenase family.

It catalyses the reaction D-mannitol 1-phosphate + NAD(+) = beta-D-fructose 6-phosphate + NADH + H(+). The chain is Mannitol-1-phosphate 5-dehydrogenase from Yersinia pseudotuberculosis serotype O:3 (strain YPIII).